The primary structure comprises 225 residues: Small ribosomal subunit protein eS1 (225 aa).

Over residues 206 to 216 (PVEEPAAEEVA) the composition is skewed to acidic residues. A disordered region spans residues 206–225 (PVEEPAAEEVAEAPAAETQE).

The protein belongs to the eukaryotic ribosomal protein eS1 family.

The polypeptide is Small ribosomal subunit protein eS1 (Methanococcus maripaludis (strain C5 / ATCC BAA-1333)).